The sequence spans 592 residues: Frizzled-5 (592 aa).

The N-terminal stretch at 1 to 38 is a signal peptide; it reads MRKPADEHHFTMETSGMHLVGFWLHVLLLFQLSGLGDS. Over 39-248 the chain is Extracellular; the sequence is ASKDIVCEPI…QDERTFTTFW (210 aa). Positions 40–161 constitute an FZ domain; sequence SKDIVCEPIT…GDTDRLCMDR (122 aa). Disulfide bonds link C45–C106, C53–C99, C90–C128, C117–C158, and C121–C145. The segment at 162–192 is disordered; the sequence is NSSETTTLSPPFPKPTPKGTPRHRATAKSAP. Residues 249–269 traverse the membrane as a helical segment; the sequence is IGLWSVLCFVSTFTTVATFLI. At 270-280 the chain is on the cytoplasmic side; the sequence is DMERFKYPERP. The chain crosses the membrane as a helical span at residues 281–301; sequence IIFLAACYLFVSLGYIVRLLA. Residues 302-327 are Extracellular-facing; sequence GHERVACEGTGDQQHILYDTTGPALC. The chain crosses the membrane as a helical span at residues 328–348; sequence TLVFLLIYFFGMASSIWWVVL. Over 349–370 the chain is Cytoplasmic; it reads SFTWFLAAGMKWGNEAIAGYSQ. The helical transmembrane segment at 371 to 391 threads the bilayer; sequence YFHLAAWLVPSVKSIAVLALS. Topologically, residues 392–414 are extracellular; it reads SVDGDPVAGICYVGNQSLEGLRG. A helical transmembrane segment spans residues 415–435; that stretch reads FVLAPLVVYLFTGSLFLLAGF. The Cytoplasmic segment spans residues 436–461; it reads VSLFRIRSVIKQGGTKTDKLEKLMIR. The chain crosses the membrane as a helical span at residues 462 to 482; sequence IGLFTVLYTVPATIVVACLVY. Topologically, residues 483–512 are extracellular; it reads EQHYRPSWERALACSCPSERQRLGMGPDYA. The chain crosses the membrane as a helical span at residues 513–533; it reads VFMLKYFMCLVVGITSGVWIW. The Cytoplasmic portion of the chain corresponds to 534–592; the sequence is SGKTLESWRRFIARYVPCRTRKPPVSASSMYSEASTALTARAGTAPTGTYHKSAPSSHV.

Belongs to the G-protein coupled receptor Fz/Smo family.

It is found in the cell membrane. Its subcellular location is the golgi apparatus membrane. The protein resides in the synapse. It localises to the perikaryon. The protein localises to the cell projection. It is found in the dendrite. Its subcellular location is the axon. Its function is as follows. Receptor for Wnt proteins. Following binding, activates the canonical Wnt/beta-catenin signaling pathway. Also activates wnt non-canonical signaling. In neurons, activation of the Wnt pathway promotes formation of synapses. May be involved in transduction and intercellular transmission of polarity information during tissue morphogenesis and/or in differentiated tissues. Plays a role in early eye development, possibly through wnt non-canonical signaling. As a receptor for wnt11, promotes eye formation, at least partially, by antagonizing the Wnt/beta-catenin pathway. In addition, promotes coherence of eye field cells, potentially contributing to the coordinated morphogenetic behaviors of cells in the nascent eye field. The chain is Frizzled-5 (fzd5) from Danio rerio (Zebrafish).